Reading from the N-terminus, the 122-residue chain is Large ribosomal subunit protein uL14 (122 aa).

Belongs to the universal ribosomal protein uL14 family. Part of the 50S ribosomal subunit. Forms a cluster with proteins L3 and L19. In the 70S ribosome, L14 and L19 interact and together make contacts with the 16S rRNA in bridges B5 and B8.

Its function is as follows. Binds to 23S rRNA. Forms part of two intersubunit bridges in the 70S ribosome. The sequence is that of Large ribosomal subunit protein uL14 from Geobacillus kaustophilus (strain HTA426).